A 285-amino-acid chain; its full sequence is Phosphoribosylaminoimidazole-succinocarboxamide synthase (285 aa).

It belongs to the SAICAR synthetase family.

The catalysed reaction is 5-amino-1-(5-phospho-D-ribosyl)imidazole-4-carboxylate + L-aspartate + ATP = (2S)-2-[5-amino-1-(5-phospho-beta-D-ribosyl)imidazole-4-carboxamido]succinate + ADP + phosphate + 2 H(+). The protein operates within purine metabolism; IMP biosynthesis via de novo pathway; 5-amino-1-(5-phospho-D-ribosyl)imidazole-4-carboxamide from 5-amino-1-(5-phospho-D-ribosyl)imidazole-4-carboxylate: step 1/2. The protein is Phosphoribosylaminoimidazole-succinocarboxamide synthase of Leptospira interrogans serogroup Icterohaemorrhagiae serovar copenhageni (strain Fiocruz L1-130).